A 459-amino-acid chain; its full sequence is Trigger factor (459 aa).

A PPIase FKBP-type domain is found at 166 to 245 (GDFANIDLTA…VNSVKAEELP (80 aa)).

The protein belongs to the FKBP-type PPIase family. Tig subfamily.

The protein resides in the cytoplasm. It catalyses the reaction [protein]-peptidylproline (omega=180) = [protein]-peptidylproline (omega=0). Its function is as follows. Involved in protein export. Acts as a chaperone by maintaining the newly synthesized protein in an open conformation. Functions as a peptidyl-prolyl cis-trans isomerase. This chain is Trigger factor, found in Bifidobacterium longum (strain NCC 2705).